The primary structure comprises 453 residues: UDP-N-acetylmuramate--L-alanine ligase (453 aa).

112 to 118 (GTHGKTT) serves as a coordination point for ATP.

This sequence belongs to the MurCDEF family.

It is found in the cytoplasm. It catalyses the reaction UDP-N-acetyl-alpha-D-muramate + L-alanine + ATP = UDP-N-acetyl-alpha-D-muramoyl-L-alanine + ADP + phosphate + H(+). It participates in cell wall biogenesis; peptidoglycan biosynthesis. Functionally, cell wall formation. The polypeptide is UDP-N-acetylmuramate--L-alanine ligase (Lawsonia intracellularis (strain PHE/MN1-00)).